Consider the following 295-residue polypeptide: Pyridoxal 5'-phosphate synthase subunit PdxS (295 aa).

Aspartate 25 is a D-ribose 5-phosphate binding site. Lysine 82 (schiff-base intermediate with D-ribose 5-phosphate) is an active-site residue. D-ribose 5-phosphate is bound at residue glycine 154. Arginine 166 contributes to the D-glyceraldehyde 3-phosphate binding site. D-ribose 5-phosphate contacts are provided by residues glycine 215 and 236–237; that span reads GS.

Belongs to the PdxS/SNZ family. In the presence of PdxT, forms a dodecamer of heterodimers.

The enzyme catalyses aldehydo-D-ribose 5-phosphate + D-glyceraldehyde 3-phosphate + L-glutamine = pyridoxal 5'-phosphate + L-glutamate + phosphate + 3 H2O + H(+). It functions in the pathway cofactor biosynthesis; pyridoxal 5'-phosphate biosynthesis. Functionally, catalyzes the formation of pyridoxal 5'-phosphate from ribose 5-phosphate (RBP), glyceraldehyde 3-phosphate (G3P) and ammonia. The ammonia is provided by the PdxT subunit. Can also use ribulose 5-phosphate and dihydroxyacetone phosphate as substrates, resulting from enzyme-catalyzed isomerization of RBP and G3P, respectively. This Listeria monocytogenes serotype 4b (strain CLIP80459) protein is Pyridoxal 5'-phosphate synthase subunit PdxS.